A 381-amino-acid polypeptide reads, in one-letter code: Chorismate synthase (381 aa).

NADP(+) contacts are provided by arginine 41 and arginine 47. FMN-binding positions include 127 to 129 (RAS), 247 to 248 (QA), glycine 291, 306 to 310 (KPIPT), and arginine 332.

Belongs to the chorismate synthase family. In terms of assembly, homotetramer. FMNH2 is required as a cofactor.

The catalysed reaction is 5-O-(1-carboxyvinyl)-3-phosphoshikimate = chorismate + phosphate. The protein operates within metabolic intermediate biosynthesis; chorismate biosynthesis; chorismate from D-erythrose 4-phosphate and phosphoenolpyruvate: step 7/7. Catalyzes the anti-1,4-elimination of the C-3 phosphate and the C-6 proR hydrogen from 5-enolpyruvylshikimate-3-phosphate (EPSP) to yield chorismate, which is the branch point compound that serves as the starting substrate for the three terminal pathways of aromatic amino acid biosynthesis. This reaction introduces a second double bond into the aromatic ring system. This chain is Chorismate synthase, found in Anaeromyxobacter sp. (strain K).